The sequence spans 601 residues: Elongation factor 4 (601 aa).

Positions 5–187 (IRKKNFCIIA…AICKHVPSPR (183 aa)) constitute a tr-type G domain. GTP is bound by residues 17 to 22 (DHGKST) and 134 to 137 (NKID).

It belongs to the TRAFAC class translation factor GTPase superfamily. Classic translation factor GTPase family. LepA subfamily.

Its subcellular location is the cell inner membrane. The enzyme catalyses GTP + H2O = GDP + phosphate + H(+). In terms of biological role, required for accurate and efficient protein synthesis under certain stress conditions. May act as a fidelity factor of the translation reaction, by catalyzing a one-codon backward translocation of tRNAs on improperly translocated ribosomes. Back-translocation proceeds from a post-translocation (POST) complex to a pre-translocation (PRE) complex, thus giving elongation factor G a second chance to translocate the tRNAs correctly. Binds to ribosomes in a GTP-dependent manner. This chain is Elongation factor 4, found in Borrelia garinii subsp. bavariensis (strain ATCC BAA-2496 / DSM 23469 / PBi) (Borreliella bavariensis).